A 559-amino-acid chain; its full sequence is Hepatocyte nuclear factor 1-alpha (559 aa).

The HNF-p1 domain maps to 13–44 (GPGRLSALQEQLIWALLGSGLSREVLVHALGE). The segment at 14-43 (PGRLSALQEQLIWALLGSGLSREVLVHALG) is dimerization. Over residues 49–62 (RVTPGAEKGDRGDG) the composition is skewed to basic and acidic residues. The tract at residues 49-73 (RVTPGAEKGDRGDGESSEEGEMDFP) is disordered. A POU-specific atypical domain is found at 78–173 (QELEALAPEE…ISQQFTNARH (96 aa)). Interaction with DNA regions lie at residues 121–123 (QRE), 134–140 (HLSQHLN), 146–149 (KNQK), 192–195 (RFKW), 252–254 (RVY), and 259–262 (NRRK). A Nuclear localization signal motif is present at residues 186–194 (RKGRRNRFK). The segment at residues 188–268 (GRRNRFKWGP…NRRKEEAFRH (81 aa)) is a DNA-binding region (homeobox; HNF1-type). Residues 492–559 (TDPEEQTDQP…IPAQMVSTAQ (68 aa)) form a disordered region. A compositionally biased stretch (polar residues) spans 499 to 522 (DQPIQEDSLHLQSPSPVPVSSGNL).

Belongs to the HNF1 homeobox family. Binds DNA as a dimer. Expressed in liver, intestine, spleen and kidney.

Its subcellular location is the nucleus. Transcriptional activator that regulates the tissue specific expression of multiple genes, especially in pancreas and liver. Binds to the promoter of the albumin gene. This is Hepatocyte nuclear factor 1-alpha (hnf1a) from Salmo salar (Atlantic salmon).